We begin with the raw amino-acid sequence, 185 residues long: MVSKVALLLAVLVCSQYMAQGVYVVSKAEWGGRGAKWTVGLGNYLSYAIIHHTAGSYCETRAQCNAVLQSVQNYHMDSLGWPDIGYNFLIGGDGNVYEGRGWNNMGAHAAEWNPYSIGISFLGNYNWDTLEPNMISAAQQLLNDAVNRGQLSSGYILYGHRQVSATECPGTHIWNEIRGWSHWSG.

Residues 1–21 (MVSKVALLLAVLVCSQYMAQG) form the signal peptide. The N-acetylmuramoyl-L-alanine amidase domain occupies 46–170 (SYAIIHHTAG…RQVSATECPG (125 aa)). Zn(2+) is bound at residue H51. C58 and C64 are oxidised to a cystine. Zn(2+)-binding residues include H160 and C168.

It belongs to the N-acetylmuramoyl-L-alanine amidase 2 family. Zn(2+) serves as cofactor.

The protein resides in the secreted. It carries out the reaction Hydrolyzes the link between N-acetylmuramoyl residues and L-amino acid residues in certain cell-wall glycopeptides.. Its function is as follows. N-acetylmuramyl-L-alanine amidase involved in innate immunity by degrading bacterial peptidoglycans (PGN). Plays a scavenger role by digesting biologically active PGN into biologically inactive fragments. Has no direct bacteriolytic activity. This chain is Peptidoglycan-recognition protein SC1a, found in Drosophila melanogaster (Fruit fly).